We begin with the raw amino-acid sequence, 251 residues long: Putative glutamine amidotransferase YLR126C (251 aa).

Residues 48 to 232 (EVFHVQKNVF…NRYERQCQEL (185 aa)) enclose the Glutamine amidotransferase type-1 domain. Residues Cys-112, His-198, and Glu-200 each act as for GATase activity in the active site.

It localises to the cytoplasm. Functionally, may have a role in copper and iron homeostasis. The chain is Putative glutamine amidotransferase YLR126C from Saccharomyces cerevisiae (strain ATCC 204508 / S288c) (Baker's yeast).